A 119-amino-acid polypeptide reads, in one-letter code: MALKIRLRQQGRRNHVVYRLVLADVESPRDGKYIELLGWYDPHSSINYQLKSERIFYWLERGAQLSSKAEALVKQGAPGVYSALLSKQEARKLVVRKKRRAYRQRRSTQREEAAKDATK.

The segment covering 96-107 has biased composition (basic residues); that stretch reads RKKRRAYRQRRS. The segment at 96-119 is disordered; the sequence is RKKRRAYRQRRSTQREEAAKDATK. Basic and acidic residues predominate over residues 108–119; it reads TQREEAAKDATK.

This sequence belongs to the bacterial ribosomal protein bS16 family.

The sequence is that of Small ribosomal subunit protein bS16 from Chlamydia pneumoniae (Chlamydophila pneumoniae).